Consider the following 499-residue polypeptide: Protein phosphatase PP2A 55 kDa regulatory subunit (499 aa).

The disordered stretch occupies residues 1–30; sequence MGRWGRQSPVLEPPDPQMQTTPPPPTLPPR. The segment covering 11-28 has biased composition (pro residues); sequence LEPPDPQMQTTPPPPTLP. WD repeat units follow at residues 79-118, 144-185, 228-266, 277-317, 336-374, 391-432, and 467-498; these read TDADIISCVEFNHDGELLATGDKGGRVVIFQRDPASKAAN, EIEE…KSFG, AHTYHINSISVNSDQETFLSADDLRINLWHLEVVNQSYN, ELTE…LCDR, EIISSISDVKLSNSGRYMISRDYLSIKVWDLHMETKPIE, ENDC…DVTL, and DFNKKILHTAWHPEENIIAVAATNNLFIFQDK.

It belongs to the phosphatase 2A regulatory subunit B family. PP2A exists in several trimeric forms, all of which consist of a core composed of a catalytic subunit associated with a 65 kDa regulatory subunit (PR65) (subunit A). The core complex associates with a third, variable subunit (subunit B), which confers distinct properties to the holoenzyme.

Its function is as follows. Could perform a substrate recognition function or could be responsible for targeting the enzyme complex to the appropriate subcellular compartment. The sequence is that of Protein phosphatase PP2A 55 kDa regulatory subunit (tws) from Drosophila melanogaster (Fruit fly).